A 485-amino-acid chain; its full sequence is Probable cobyric acid synthase (485 aa).

The GATase cobBQ-type domain occupies glutamate 250–isoleucine 435. Cysteine 328 (nucleophile) is an active-site residue. Residue histidine 427 is part of the active site.

The protein belongs to the CobB/CobQ family. CobQ subfamily.

Its pathway is cofactor biosynthesis; adenosylcobalamin biosynthesis. In terms of biological role, catalyzes amidations at positions B, D, E, and G on adenosylcobyrinic A,C-diamide. NH(2) groups are provided by glutamine, and one molecule of ATP is hydrogenolyzed for each amidation. The sequence is that of Probable cobyric acid synthase from Methanosarcina barkeri (strain Fusaro / DSM 804).